We begin with the raw amino-acid sequence, 603 residues long: HAUS augmin-like complex subunit 3 (603 aa).

S2 is subject to N-acetylserine. Coiled-coil stretches lie at residues 93 to 177, 305 to 336, 389 to 426, and 458 to 495; these read RLDD…TQLM, VDKENLDAKISSLTSEIMKLEKEVTQIKDRSL, LSYEIELRKHRDIYRQLENLVQELSQSNMMLYKQLEML, and ENKKKELFLTHGNLEEVAEKLKQNISLVQDQLAVSAQE.

It belongs to the HAUS3 family. Component of the HAUS augmin-like complex. The complex interacts with the gamma-tubulin ring complex and this interaction is required for spindle assembly. Interacts with EML3 (phosphorylated at 'Thr-881').

The protein resides in the cytoplasm. The protein localises to the cytoskeleton. Its subcellular location is the microtubule organizing center. It is found in the centrosome. It localises to the spindle. In terms of biological role, contributes to mitotic spindle assembly, maintenance of centrosome integrity and completion of cytokinesis as part of the HAUS augmin-like complex. This Homo sapiens (Human) protein is HAUS augmin-like complex subunit 3 (HAUS3).